The primary structure comprises 226 residues: uncharacterized protein (226 aa).

An ABC transporter domain is found at 4 to 226 (LQFQQVGYWY…FTVKENVAVV (223 aa)). Position 38–45 (38–45 (GTSGTGKT)) interacts with ATP.

The protein belongs to the ABC transporter superfamily.

This is an uncharacterized protein from Bacillus subtilis (strain 168).